Here is a 250-residue protein sequence, read N- to C-terminus: Ribosomal RNA small subunit methyltransferase J (250 aa).

Residues 96–97 (RD) and aspartate 168 contribute to the S-adenosyl-L-methionine site.

The protein belongs to the methyltransferase superfamily. RsmJ family.

The protein localises to the cytoplasm. It carries out the reaction guanosine(1516) in 16S rRNA + S-adenosyl-L-methionine = N(2)-methylguanosine(1516) in 16S rRNA + S-adenosyl-L-homocysteine + H(+). Functionally, specifically methylates the guanosine in position 1516 of 16S rRNA. This is Ribosomal RNA small subunit methyltransferase J from Neisseria meningitidis serogroup B (strain ATCC BAA-335 / MC58).